A 384-amino-acid chain; its full sequence is Surfeit locus protein 1-like (384 aa).

The next 3 membrane-spanning stretches (helical) occupy residues 55-75 (ALLWYLVGFTTYGLGETYKFL), 302-322 (IPLDYHLYTVLWHWSSLTCFI), and 338-358 (IGVEPILIPISILVFICTKIY).

This sequence belongs to the SURF1 (TC 3.D.4.8) family.

The protein localises to the mitochondrion inner membrane. Functionally, may be involved in the biogenesis of the COX complex. In Arabidopsis thaliana (Mouse-ear cress), this protein is Surfeit locus protein 1-like.